The chain runs to 513 residues: Laccase (513 aa).

Plastocyanin-like domains are found at residues 45–81 (PTRLWGYNGLFPGPTIEVKRNENVYVKWMNNLPSTHF), 101–178 (KTVV…HDPK), 240–318 (WPYL…ILAN), and 378–509 (QDEY…MDIT). Residues His-105, His-107, His-153, and His-155 each coordinate Cu cation. His-419, His-422, His-424, His-491, Cys-492, His-493, His-497, and Met-502 together coordinate Cu cation.

Belongs to the multicopper oxidase family. As to quaternary structure, monomer. It depends on Cu(2+) as a cofactor.

It localises to the spore coat. The catalysed reaction is 4 hydroquinone + O2 = 4 benzosemiquinone + 2 H2O. It catalyses the reaction 2 (4Z,15Z)-bilirubin IXalpha + O2 = 2 biliverdin IXalpha + 2 H2O. Its activity is regulated as follows. Inhibited by azide. Multicopper oxidase that catalyzes the oxidation of a variety of substrates, including phenolic and non-phenolic compounds. Substrates include syringaldazine (SGZ), 2,6-dimethoxyphenol (2,6-DMP) and the non-phenolic compound 2,2'-azino-bis(3-ethylbenzothiazoline-6-sulfonic acid) (ABTS). Has no tyrosinase activity. Is implicated in the biosynthesis of a brownish pigment that characterizes sporulating colonies of B.subtilis, and which appears to be a melanin-like product and to confer protection against UV light. Its function is as follows. In vitro, also shows strong bilirubin oxidase (BOD) activity, and can catalyze the oxidation of free bilirubin (UB), direct bilirubin (conjugated with glucuronic acid, DB) and ditaurobilirubin. In Bacillus subtilis (strain 168), this protein is Laccase.